We begin with the raw amino-acid sequence, 241 residues long: Isoprenyl transferase (241 aa).

Asp-17 is an active-site residue. Asp-17 provides a ligand contact to Mg(2+). Substrate-binding positions include 18–21 (GNGR), Trp-22, Arg-30, His-34, and 62–64 (STE). Asn-65 acts as the Proton acceptor in catalysis. Residues Trp-66, Arg-68, Arg-186, and 192–194 (RLS) each bind substrate. Glu-205 contacts Mg(2+).

Belongs to the UPP synthase family. In terms of assembly, homodimer. It depends on Mg(2+) as a cofactor.

Its function is as follows. Catalyzes the condensation of isopentenyl diphosphate (IPP) with allylic pyrophosphates generating different type of terpenoids. The chain is Isoprenyl transferase from Leptospira interrogans serogroup Icterohaemorrhagiae serovar copenhageni (strain Fiocruz L1-130).